A 276-amino-acid chain; its full sequence is Diaminopimelate epimerase (276 aa).

Positions 13, 46, and 66 each coordinate substrate. Cys75 functions as the Proton donor in the catalytic mechanism. Residues Gly76 to Asn77, Asn159, Asn192, and Glu210 to Arg211 each bind substrate. Cys219 serves as the catalytic Proton acceptor. Gly220–Ser221 is a substrate binding site.

Belongs to the diaminopimelate epimerase family. Homodimer.

The protein resides in the cytoplasm. The enzyme catalyses (2S,6S)-2,6-diaminopimelate = meso-2,6-diaminopimelate. The protein operates within amino-acid biosynthesis; L-lysine biosynthesis via DAP pathway; DL-2,6-diaminopimelate from LL-2,6-diaminopimelate: step 1/1. Catalyzes the stereoinversion of LL-2,6-diaminopimelate (L,L-DAP) to meso-diaminopimelate (meso-DAP), a precursor of L-lysine and an essential component of the bacterial peptidoglycan. This Vibrio campbellii (strain ATCC BAA-1116) protein is Diaminopimelate epimerase.